Reading from the N-terminus, the 373-residue chain is Ribonuclease D (373 aa).

The region spanning 3–171 is the 3'-5' exonuclease domain; sequence YQLITTDAGL…MAKRLVQETE (169 aa). The HRDC domain maps to 210–289; sequence RPRQLGCLQK…AEAAELEESA (80 aa).

This sequence belongs to the RNase D family. A divalent metal cation serves as cofactor.

The protein resides in the cytoplasm. It carries out the reaction Exonucleolytic cleavage that removes extra residues from the 3'-terminus of tRNA to produce 5'-mononucleotides.. In terms of biological role, exonuclease involved in the 3' processing of various precursor tRNAs. Initiates hydrolysis at the 3'-terminus of an RNA molecule and releases 5'-mononucleotides. This chain is Ribonuclease D, found in Serratia proteamaculans (strain 568).